A 130-amino-acid chain; its full sequence is Small ribosomal subunit protein uS8 (130 aa).

The protein belongs to the universal ribosomal protein uS8 family. In terms of assembly, part of the 30S ribosomal subunit. Contacts proteins S5 and S12.

Its function is as follows. One of the primary rRNA binding proteins, it binds directly to 16S rRNA central domain where it helps coordinate assembly of the platform of the 30S subunit. The chain is Small ribosomal subunit protein uS8 from Ectopseudomonas mendocina (strain ymp) (Pseudomonas mendocina).